The chain runs to 120 residues: uncharacterized protein (120 aa).

This sequence belongs to the asp23 family.

This is an uncharacterized protein from Bacillus subtilis (strain 168).